A 518-amino-acid polypeptide reads, in one-letter code: Phytoene desaturase (neurosporene-forming) (518 aa).

14-47 (LVIGSGLGGLAAAMRLGAKGWRVTVIDKLDVPGG) contacts FAD.

This sequence belongs to the carotenoid/retinoid oxidoreductase family. FAD serves as cofactor.

It carries out the reaction 15-cis-phytoene + 3 A = all-trans-neurosporene + 3 AH2. It functions in the pathway carotenoid biosynthesis. Its function is as follows. Converts phytoene into all-trans-neurosporene as the major product, via the intermediary of phytofluene and zeta-carotene, by the introduction of three double bonds. This is Phytoene desaturase (neurosporene-forming) (crtI) from Cereibacter sphaeroides (strain ATCC 17023 / DSM 158 / JCM 6121 / CCUG 31486 / LMG 2827 / NBRC 12203 / NCIMB 8253 / ATH 2.4.1.) (Rhodobacter sphaeroides).